Consider the following 166-residue polypeptide: Prorelaxin H2 (166 aa).

Positions 1-5 (SRAVA) are cleaved as a signal peptide. 3 cysteine pairs are disulfide-bonded: Cys16/Cys153, Cys28/Cys166, and Cys152/Cys157. A propeptide spans 37-138 (SLSQEDAPQT…LKYLGLDTHS (102 aa)) (connecting peptide).

It belongs to the insulin family. As to quaternary structure, heterodimer of a B chain and an A chain linked by two disulfide bonds. As to expression, expressed in the corpus luteum of pregnancy and in the placenta.

The protein localises to the secreted. Relaxin is an ovarian hormone that acts with estrogen to produce dilatation of the birth canal in many mammals. May be involved in remodeling of connective tissues during pregnancy, promoting growth of pubic ligaments and ripening of the cervix. The sequence is that of Prorelaxin H2 (RNL2) from Pan troglodytes (Chimpanzee).